Here is a 28-residue protein sequence, read N- to C-terminus: Cruzioseptin-10 (28 aa).

As to expression, expressed by the skin glands.

Its subcellular location is the secreted. Functionally, has antimicrobial activity. This Cruziohyla calcarifer (Splendid leaf frog) protein is Cruzioseptin-10.